Consider the following 268-residue polypeptide: MSSEDTTSQRAPRNWWGPFAPIGEALRFLTILPVPGLPPMSEEAIPQSIRYFPIAGLVIGGILAAVGWGAGVLWNETVRAVVLVVAWGVLTAGMHLDGLSDTFDGVMSWRSRERKLEIMRDSRIGVMGALALAAVLGLKAAFLAGAGDAWLTAVVLAPVLGRWADVYGIVRFPPAREGGLGRTFQSYLRPGDFAGASVATLALALIVGGVGGLIALALVWMVTHLLGRWWTRDLGGLTGDTYGALCEIAEVVALATLTLSAPMRLLAT.

Transmembrane regions (helical) follow at residues 54-74 (IAGL…GVLW), 80-100 (AVVL…DGLS), 124-144 (IGVM…AFLA), 150-170 (WLTA…YGIV), 202-222 (ALAL…VWMV), and 243-263 (GALC…SAPM).

The protein belongs to the CobS family. The cofactor is Mg(2+).

It is found in the cell membrane. The catalysed reaction is alpha-ribazole + adenosylcob(III)inamide-GDP = adenosylcob(III)alamin + GMP + H(+). It carries out the reaction alpha-ribazole 5'-phosphate + adenosylcob(III)inamide-GDP = adenosylcob(III)alamin 5'-phosphate + GMP + H(+). It participates in cofactor biosynthesis; adenosylcobalamin biosynthesis; adenosylcobalamin from cob(II)yrinate a,c-diamide: step 7/7. Joins adenosylcobinamide-GDP and alpha-ribazole to generate adenosylcobalamin (Ado-cobalamin). Also synthesizes adenosylcobalamin 5'-phosphate from adenosylcobinamide-GDP and alpha-ribazole 5'-phosphate. The protein is Adenosylcobinamide-GDP ribazoletransferase of Roseiflexus sp. (strain RS-1).